The primary structure comprises 356 residues: Putative methylthioribose-1-phosphate isomerase (356 aa).

Residues 57–59 (RGA), Arg100, and Gln206 each bind substrate. Catalysis depends on Asp247, which acts as the Proton donor. Position 257–258 (257–258 (NK)) interacts with substrate.

Belongs to the eIF-2B alpha/beta/delta subunits family. MtnA subfamily.

The catalysed reaction is 5-(methylsulfanyl)-alpha-D-ribose 1-phosphate = 5-(methylsulfanyl)-D-ribulose 1-phosphate. In terms of biological role, catalyzes the interconversion of methylthioribose-1-phosphate (MTR-1-P) into methylthioribulose-1-phosphate (MTRu-1-P). This Pyrococcus furiosus (strain ATCC 43587 / DSM 3638 / JCM 8422 / Vc1) protein is Putative methylthioribose-1-phosphate isomerase.